Consider the following 944-residue polypeptide: MALKSPAFRRKFPLLVTGGLLALQPLATSFVVAAEQFDCQVSAAGGWDCKPKATGNLPPRPVHPGAAAASSGAEAPGEVGEAQAEKPMLVTESKGRGLKSRSEDYSHLDWVPREKLTAAQLAETGPYCGGAYIEPTRPGMNDTTPKDESPTYINAKVSKYQQEQQIATLAGDVVMRQGSMQAEADEANLYQAENRGELKGNVKIRDNGSLVVGDEAQIQLDTGEARVDNAEYVMHKSHIRGNALYAKRAENAIIRLKDGTYTTCEPGSNAWQLKGNNITLNPATGFGTATNVTLRVKDFPVLYTPYIYFPIDDRRQSGFLPPSFSTSSDTGFMLVTPYYFNLAPNYDATLYPRYMAKRGMLMEGEFRYLTKSSEGQFGGAYLNDESDDRKLQTDYKKERWMVNWQHKGGLDERLMTEVDYTDISDPFYFQDLETDQIGVEKRDFVNQQGALNYRGDNYTARLNVHAYEMATISQITPYDKLPQVTFNGTLPFHPSGLDFGYETEAVRFERDLKNDLVFDKDGKPDESIGVVKDANGEVIGGRRIDESLRGIARANGTRLNAAPSISLPMEASYGFLTPKLKYVYTHYDLDLNSRGQAQAAQDSANPAYGTYNSAINRNVPIFSVDSGLYFDRNTQLFGTNYRQTLEPRLFYLYVPYKDQRDIPLFDTGETLFNYASLFRDNRFAGTDRIGDENKLSLGVTNRWIEDNGFQRQRFSIGQAYYFKDRKVQLPGIDYRTRKDSQSDVSPYALEYEYAFNRDWRFNSDFNWDPDSRSTRSGSAMFHYQPEDNPNKIVNLGYRYRNDTITYDSLTGAWKVGGGDYGSPGDANYIKDYYKIQQHDFSVIWPIVPQWSVIARWQHDYNRNRTLEAMGGFEYDSCCWKLRLINRYWLDYDDFSQATPTNEKGDHGVFLQVVLKGLGGVVGNKVESFLDQGIQGYRTREEQAY.

The N-terminal stretch at 1-33 (MALKSPAFRRKFPLLVTGGLLALQPLATSFVVA) is a signal peptide. A disordered region spans residues 52 to 102 (KATGNLPPRPVHPGAAAASSGAEAPGEVGEAQAEKPMLVTESKGRGLKSRS). Residues 64–82 (PGAAAASSGAEAPGEVGEA) are compositionally biased toward low complexity.

The protein belongs to the LptD family. As to quaternary structure, component of the lipopolysaccharide transport and assembly complex. Interacts with LptE and LptA.

The protein localises to the cell outer membrane. Its function is as follows. Together with LptE, is involved in the assembly of lipopolysaccharide (LPS) at the surface of the outer membrane. The protein is LPS-assembly protein LptD of Pseudomonas entomophila (strain L48).